The sequence spans 153 residues: UPF0311 protein Rpal_1987 (153 aa).

Belongs to the UPF0311 family.

This is UPF0311 protein Rpal_1987 from Rhodopseudomonas palustris (strain TIE-1).